A 683-amino-acid chain; its full sequence is Outer dynein arm-docking complex subunit 4 (683 aa).

TPR repeat units follow at residues 13–46 (FPSY…QSGD), 47–80 (KNCL…DPTF), 48–80 (NCLV…DPTF), and 81–114 (CKGI…RPDR). Residues 158–179 (QQKPHPVRQLIHHPKRESKRKG) are disordered. Residues 167–179 (LIHHPKRESKRKG) are compositionally biased toward basic residues. TPR repeat units follow at residues 275-311 (LKSL…NKEE), 320-353 (GNLY…AKEY), 360-393 (SRAL…AKTT), 397-430 (TWLF…AEEE), and 437-470 (LNAS…AKLV). Disordered regions lie at residues 510-537 (ENAT…PEKV) and 553-683 (VLSK…EPIE). Basic and acidic residues-rich tracts occupy residues 521-537 (TAKE…PEKV), 566-590 (PEQR…ERGP), 602-620 (GRTE…RPSE), and 629-675 (SSPR…IEKD). The stretch at 592-625 (DTAKGQFGEAGRTEQNREETREIYRRPSELDQNL) is one TPR 15 repeat.

In terms of assembly, component of the outer dynein arm-docking complex along with ODAD1, ODAD2 and ODAD3. Interacts with ODAD1; this interaction may facilitate the recruitment and/or attachment of outer dynein arm docking complex proteins, including ODAD1, ODAD3 and ODAD2, to ciliary axonemes. Interacts with components of the IFT complex A, including IFT140, TTC21B/IFT139 and WDR19/IFT144, and the IFT complex B, including IFT46, IFT52 and IFT57. Interacts with CFAP53. Expressed in trachea multiciliated cells.

Its subcellular location is the cytoplasm. The protein resides in the cytoskeleton. The protein localises to the cilium axoneme. Component of the outer dynein arm-docking complex (ODA-DC) that mediates outer dynein arms (ODA) binding onto the doublet microtubule. Plays an essential role for the assembly of ODA-DC and for the docking of ODA in ciliary axoneme. This is Outer dynein arm-docking complex subunit 4 from Bos taurus (Bovine).